Reading from the N-terminus, the 457-residue chain is UDP-N-acetylglucosamine 1-carboxyvinyltransferase (457 aa).

34-35 (KN) contacts phosphoenolpyruvate. UDP-N-acetyl-alpha-D-glucosamine is bound at residue Arg104. Cys128 functions as the Proton donor in the catalytic mechanism. Cys128 carries the 2-(S-cysteinyl)pyruvic acid O-phosphothioketal modification. UDP-N-acetyl-alpha-D-glucosamine-binding residues include Asp319 and Ile341. The interval 436-457 (INKSKNRSSNSKLKEVSEIRAA) is disordered. The segment covering 447–457 (KLKEVSEIRAA) has biased composition (basic and acidic residues).

The protein belongs to the EPSP synthase family. MurA subfamily.

It is found in the cytoplasm. The enzyme catalyses phosphoenolpyruvate + UDP-N-acetyl-alpha-D-glucosamine = UDP-N-acetyl-3-O-(1-carboxyvinyl)-alpha-D-glucosamine + phosphate. It participates in cell wall biogenesis; peptidoglycan biosynthesis. Its function is as follows. Cell wall formation. Adds enolpyruvyl to UDP-N-acetylglucosamine. This Prochlorococcus marinus subsp. pastoris (strain CCMP1986 / NIES-2087 / MED4) protein is UDP-N-acetylglucosamine 1-carboxyvinyltransferase.